Here is a 339-residue protein sequence, read N- to C-terminus: Sphingolipid long chain base-responsive protein PIL1 (339 aa).

The segment covering 1–19 (MHRTYSLRNSRAPTASQLQ) has biased composition (polar residues). A disordered region spans residues 1-31 (MHRTYSLRNSRAPTASQLQNPPPPPSTTKGR). Threonine 14 carries the phosphothreonine modification. Residue serine 16 is modified to Phosphoserine. Residue lysine 29 forms a Glycyl lysine isopeptide (Lys-Gly) (interchain with G-Cter in ubiquitin) linkage. A phosphoserine mark is found at serine 45, serine 98, serine 163, and serine 230. A Phosphothreonine modification is found at threonine 233. Residues 273-339 (SFKQDYEDFE…SESLPQQTTA (67 aa)) are disordered. The segment covering 279–293 (EDFEPEEGEEEEEED) has biased composition (acidic residues). Residue serine 299 is modified to Phosphoserine. The span at 301-318 (DEQEDGQIEEPEQEEEGA) shows a compositional bias: acidic residues. The segment covering 326-339 (GHQQSESLPQQTTA) has biased composition (polar residues).

Post-translationally, phosphorylated by PKH1 and PKH2. Phosphorylation is inhibited by sphingolipid long chain bases (LCBs).

The protein localises to the lipid droplet. Negative regulator of cell wall integrity (CWI) in unstressed cells, probably by inhibiting protein kinase PKH1/PHK2 activity and regulating their downstream CWI pathways PKC1-MAP kinase pathway and protein kinase YPK1 pathway. Activity may be regulated by the transient increase of sphingolipid long chain bases (LCBs) during heat stress. This Saccharomyces cerevisiae (strain ATCC 204508 / S288c) (Baker's yeast) protein is Sphingolipid long chain base-responsive protein PIL1 (PIL1).